The sequence spans 306 residues: Peroxisome biogenesis factor 2 (306 aa).

Topologically, residues methionine 1–leucine 15 are peroxisomal matrix. A helical membrane pass occupies residues arginine 16 to glutamine 42. The Cytoplasmic portion of the chain corresponds to glycine 43–leucine 48. The chain crosses the membrane as a helical span at residues leucine 49 to alanine 74. At threonine 75–leucine 98 the chain is on the peroxisomal matrix side. Residues asparagine 99 to serine 125 traverse the membrane as a helical segment. The Cytoplasmic segment spans residues asparagine 126 to glutamine 134. Residues arginine 135–glutamine 161 form a helical membrane-spanning segment. The Peroxisomal matrix portion of the chain corresponds to glycine 162–glycine 188. The helical transmembrane segment at phenylalanine 189–isoleucine 212 threads the bilayer. At asparagine 213 to leucine 306 the chain is on the cytoplasmic side. Zn(2+) is bound by residues cysteine 245, cysteine 248, cysteine 260, histidine 262, cysteine 265, cysteine 268, cysteine 281, and cysteine 284. Residues cysteine 245 to serine 285 form an RING-type zinc finger.

This sequence belongs to the pex2/pex10/pex12 family. As to quaternary structure, component of the PEX2-PEX10-PEX12 retrotranslocation channel.

The protein resides in the peroxisome membrane. The catalysed reaction is [E2 ubiquitin-conjugating enzyme]-S-ubiquitinyl-L-cysteine + [acceptor protein]-L-cysteine = [E2 ubiquitin-conjugating enzyme]-L-cysteine + [acceptor protein]-S-ubiquitinyl-L-cysteine.. It catalyses the reaction S-ubiquitinyl-[E2 ubiquitin-conjugating enzyme]-L-cysteine + [acceptor protein]-L-lysine = [E2 ubiquitin-conjugating enzyme]-L-cysteine + N(6)-ubiquitinyl-[acceptor protein]-L-lysine.. The protein operates within protein modification; protein ubiquitination. E3 ubiquitin-protein ligase component of a retrotranslocation channel required for peroxisome organization by mediating export of the PEX5 receptor from peroxisomes to the cytosol, thereby promoting PEX5 recycling. The retrotranslocation channel is composed of PEX2, PEX10 and PEX12; each subunit contributing transmembrane segments that coassemble into an open channel that specifically allows the passage of PEX5 through the peroxisomal membrane. PEX2 also regulates peroxisome organization by acting as a E3 ubiquitin-protein ligase. The protein is Peroxisome biogenesis factor 2 of Xenopus laevis (African clawed frog).